Consider the following 208-residue polypeptide: MARYTGPVCRLCRREGMKLFLKGDRCYTGKCAIDRRAYAPGQHGQSRGKKPTEYGIQLREKQKVRRIYGVQEKQFRSYYDKANRQKGIVGENLLRLLERRLDNVVFQLGFATSRPEARQLVRHGHFTINGRRVDIPSFLVRVGDVVGVKEASKSSPRLKEILSSLDRTPPKWMSLDANAATGTIIALPDREDIQLPIQEHLIVEKYSR.

Residues 99–165 (RRLDNVVFQL…PRLKEILSSL (67 aa)) enclose the S4 RNA-binding domain.

The protein belongs to the universal ribosomal protein uS4 family. Part of the 30S ribosomal subunit. Contacts protein S5. The interaction surface between S4 and S5 is involved in control of translational fidelity.

In terms of biological role, one of the primary rRNA binding proteins, it binds directly to 16S rRNA where it nucleates assembly of the body of the 30S subunit. With S5 and S12 plays an important role in translational accuracy. This is Small ribosomal subunit protein uS4 from Desulfitobacterium hafniense (strain DSM 10664 / DCB-2).